Consider the following 701-residue polypeptide: Glycine--tRNA ligase beta subunit (701 aa).

The protein belongs to the class-II aminoacyl-tRNA synthetase family. As to quaternary structure, tetramer of two alpha and two beta subunits.

The protein localises to the cytoplasm. It carries out the reaction tRNA(Gly) + glycine + ATP = glycyl-tRNA(Gly) + AMP + diphosphate. This is Glycine--tRNA ligase beta subunit from Bradyrhizobium sp. (strain BTAi1 / ATCC BAA-1182).